Here is a 204-residue protein sequence, read N- to C-terminus: Urease accessory protein UreG (204 aa).

12–19 lines the GTP pocket; it reads GPVGSGKT.

It belongs to the SIMIBI class G3E GTPase family. UreG subfamily. In terms of assembly, homodimer. UreD, UreF and UreG form a complex that acts as a GTP-hydrolysis-dependent molecular chaperone, activating the urease apoprotein by helping to assemble the nickel containing metallocenter of UreC. The UreE protein probably delivers the nickel.

It localises to the cytoplasm. Facilitates the functional incorporation of the urease nickel metallocenter. This process requires GTP hydrolysis, probably effectuated by UreG. In Pseudomonas aeruginosa (strain LESB58), this protein is Urease accessory protein UreG.